We begin with the raw amino-acid sequence, 222 residues long: Protein-L-isoaspartate O-methyltransferase (222 aa).

Ser-67 is an active-site residue.

This sequence belongs to the methyltransferase superfamily. L-isoaspartyl/D-aspartyl protein methyltransferase family.

The protein resides in the cytoplasm. It catalyses the reaction [protein]-L-isoaspartate + S-adenosyl-L-methionine = [protein]-L-isoaspartate alpha-methyl ester + S-adenosyl-L-homocysteine. Functionally, catalyzes the methyl esterification of L-isoaspartyl residues in peptides and proteins that result from spontaneous decomposition of normal L-aspartyl and L-asparaginyl residues. It plays a role in the repair and/or degradation of damaged proteins. This is Protein-L-isoaspartate O-methyltransferase from Parvibaculum lavamentivorans (strain DS-1 / DSM 13023 / NCIMB 13966).